The sequence spans 359 residues: Fructose-bisphosphate aldolase (359 aa).

Residue threonine 11 is modified to Phosphothreonine. A Glycyl lysine isopeptide (Lys-Gly) (interchain with G-Cter in ubiquitin) cross-link involves residue lysine 27. Phosphoserine occurs at positions 56 and 63. Residue serine 63 participates in D-glyceraldehyde 3-phosphate binding. Lysine 73 participates in a covalent cross-link: Glycyl lysine isopeptide (Lys-Gly) (interchain with G-Cter in ubiquitin). Phosphoserine is present on residues serine 76 and serine 83. Lysine 85 participates in a covalent cross-link: Glycyl lysine isopeptide (Lys-Gly) (interchain with G-Cter in ubiquitin). Position 96 is a phosphoserine (serine 96). Aspartate 110 serves as the catalytic Proton donor. Zn(2+) contacts are provided by histidine 111 and aspartate 145. The residue at position 147 (serine 147) is a Phosphoserine. Threonine 150 bears the Phosphothreonine mark. A Zn(2+)-binding site is contributed by glutamate 175. A Phosphothreonine modification is found at threonine 179. Residue histidine 227 coordinates Zn(2+). Dihydroxyacetone phosphate is bound at residue glycine 228. Residue histidine 265 participates in Zn(2+) binding. Residues 266–268 (GGS) and 287–290 (NLDT) contribute to the dihydroxyacetone phosphate site. Serine 268 carries the phosphoserine modification. Threonine 290 carries the post-translational modification Phosphothreonine. Residue lysine 308 forms a Glycyl lysine isopeptide (Lys-Gly) (interchain with G-Cter in ubiquitin) linkage. The residue at position 310 (tyrosine 310) is a Phosphotyrosine. Phosphoserine is present on serine 313.

The protein belongs to the class II fructose-bisphosphate aldolase family. In terms of assembly, homodimer. Zn(2+) serves as cofactor.

It carries out the reaction beta-D-fructose 1,6-bisphosphate = D-glyceraldehyde 3-phosphate + dihydroxyacetone phosphate. It functions in the pathway carbohydrate degradation; glycolysis; D-glyceraldehyde 3-phosphate and glycerone phosphate from D-glucose: step 4/4. In terms of biological role, catalyzes the aldol condensation of dihydroxyacetone phosphate (DHAP or glycerone-phosphate) with glyceraldehyde 3-phosphate (G3P) to form fructose 1,6-bisphosphate (FBP) in gluconeogenesis and the reverse reaction in glycolysis. This Saccharomyces cerevisiae (strain ATCC 204508 / S288c) (Baker's yeast) protein is Fructose-bisphosphate aldolase (FBA1).